The following is a 418-amino-acid chain: Gamma-glutamyl phosphate reductase (418 aa).

This sequence belongs to the gamma-glutamyl phosphate reductase family.

The protein resides in the cytoplasm. It catalyses the reaction L-glutamate 5-semialdehyde + phosphate + NADP(+) = L-glutamyl 5-phosphate + NADPH + H(+). It functions in the pathway amino-acid biosynthesis; L-proline biosynthesis; L-glutamate 5-semialdehyde from L-glutamate: step 2/2. Catalyzes the NADPH-dependent reduction of L-glutamate 5-phosphate into L-glutamate 5-semialdehyde and phosphate. The product spontaneously undergoes cyclization to form 1-pyrroline-5-carboxylate. This chain is Gamma-glutamyl phosphate reductase, found in Trichlorobacter lovleyi (strain ATCC BAA-1151 / DSM 17278 / SZ) (Geobacter lovleyi).